We begin with the raw amino-acid sequence, 23 residues long: NLMQFELLIMKVAGRSGIVWYSD.

Requires Ca(2+) as cofactor. Contains 7 disulfide bonds. As to expression, expressed by the venom gland.

Its subcellular location is the secreted. The catalysed reaction is a 1,2-diacyl-sn-glycero-3-phosphocholine + H2O = a 1-acyl-sn-glycero-3-phosphocholine + a fatty acid + H(+). Snake venom phospholipase A2 (PLA2) that shows a moderate inhibition of ADP-induced human platelet aggregation when tested on platelet rich plasma. Exhibits moderate hydrolytic activities and prefers the anionic micelles (dPPC with deoxycholate) to the zwitterionic micelles (dPPC with Triton X-100). PLA2 catalyzes the calcium-dependent hydrolysis of the 2-acyl groups in 3-sn-phosphoglycerides. In Trimeresurus stejnegeri (Chinese green tree viper), this protein is Acidic phospholipase A2 CTs-A2.